A 360-amino-acid chain; its full sequence is Probable ribonucleoside-diphosphate reductase small subunit 376L (360 aa).

Residues aspartate 67, glutamate 98, and histidine 101 each contribute to the Fe cation site. Tyrosine 105 is a catalytic residue. Residues glutamate 172, glutamate 206, and histidine 209 each coordinate Fe cation.

This sequence belongs to the ribonucleoside diphosphate reductase small chain family. Heterotetramer composed of a homodimer of the large subunit (R1) and a homodimer of the small subunit (R2). Larger multisubunit protein complex are also active, composed of (R1)n(R2)n. The cofactor is Fe cation.

It catalyses the reaction a 2'-deoxyribonucleoside 5'-diphosphate + [thioredoxin]-disulfide + H2O = a ribonucleoside 5'-diphosphate + [thioredoxin]-dithiol. In terms of biological role, ribonucleoside-diphosphate reductase holoenzyme provides the precursors necessary for viral DNA synthesis. Allows virus growth in non-dividing cells. Catalyzes the biosynthesis of deoxyribonucleotides from the corresponding ribonucleotides. In Acheta domesticus (House cricket), this protein is Probable ribonucleoside-diphosphate reductase small subunit 376L.